The chain runs to 211 residues: Large ribosomal subunit protein uL3 (211 aa).

The disordered stretch occupies residues A134 to G155. N5-methylglutamine is present on Q152.

This sequence belongs to the universal ribosomal protein uL3 family. Part of the 50S ribosomal subunit. Forms a cluster with proteins L14 and L19. Methylated by PrmB.

Functionally, one of the primary rRNA binding proteins, it binds directly near the 3'-end of the 23S rRNA, where it nucleates assembly of the 50S subunit. The sequence is that of Large ribosomal subunit protein uL3 from Methylococcus capsulatus (strain ATCC 33009 / NCIMB 11132 / Bath).